Here is a 218-residue protein sequence, read N- to C-terminus: Small ribosomal subunit protein mS34 (218 aa).

The segment at lysine 180–valine 218 is disordered. The span at isoleucine 196 to arginine 212 shows a compositional bias: basic and acidic residues.

This sequence belongs to the mitochondrion-specific ribosomal protein mS34 family. As to quaternary structure, component of the mitochondrial small ribosomal subunit (mt-SSU). Mature mammalian 55S mitochondrial ribosomes consist of a small (28S) and a large (39S) subunit. The 28S small subunit contains a 12S ribosomal RNA (12S mt-rRNA) and 30 different proteins. The 39S large subunit contains a 16S rRNA (16S mt-rRNA), a copy of mitochondrial valine transfer RNA (mt-tRNA(Val)), which plays an integral structural role, and 52 different proteins.

Its subcellular location is the mitochondrion. In terms of biological role, required for mitochondrial translation, plays a role in maintaining the stability of the small ribosomal subunit and the 12S rRNA that are required for mitoribosome formation. The polypeptide is Small ribosomal subunit protein mS34 (MRPS34) (Homo sapiens (Human)).